We begin with the raw amino-acid sequence, 197 residues long: Small ribosomal subunit protein uS4B (197 aa).

An S4 RNA-binding domain is found at 88-151; the sequence is CRLDNIAYRI…RKNDEFADNF (64 aa).

The protein belongs to the universal ribosomal protein uS4 family. Part of the 30S ribosomal subunit. Contacts protein S5. The interaction surface between S4 and S5 is involved in control of translational fidelity.

In terms of biological role, one of the primary rRNA binding proteins, it binds directly to 16S rRNA where it nucleates assembly of the body of the 30S subunit. Functionally, with S5 and S12 plays an important role in translational accuracy. The protein is Small ribosomal subunit protein uS4B of Clostridium botulinum (strain Langeland / NCTC 10281 / Type F).